Here is a 400-residue protein sequence, read N- to C-terminus: Queuine tRNA-ribosyltransferase (400 aa).

D93 acts as the Proton acceptor in catalysis. Substrate contacts are provided by residues 93 to 97 (DSGGF), D147, Q190, and G217. Positions 248–254 (GVGSPED) are RNA binding. Residue D267 is the Nucleophile of the active site. The segment at 272–276 (TRIAR) is RNA binding; important for wobble base 34 recognition. Zn(2+)-binding residues include C305, C307, C310, and H336. A disordered region spans residues 375–400 (RRERARAAGGAGHAPGPAEPLLPENR). Residues 388-400 (APGPAEPLLPENR) are compositionally biased toward low complexity.

The protein belongs to the queuine tRNA-ribosyltransferase family. In terms of assembly, homodimer. Within each dimer, one monomer is responsible for RNA recognition and catalysis, while the other monomer binds to the replacement base PreQ1. Zn(2+) serves as cofactor.

The enzyme catalyses 7-aminomethyl-7-carbaguanine + guanosine(34) in tRNA = 7-aminomethyl-7-carbaguanosine(34) in tRNA + guanine. It participates in tRNA modification; tRNA-queuosine biosynthesis. In terms of biological role, catalyzes the base-exchange of a guanine (G) residue with the queuine precursor 7-aminomethyl-7-deazaguanine (PreQ1) at position 34 (anticodon wobble position) in tRNAs with GU(N) anticodons (tRNA-Asp, -Asn, -His and -Tyr). Catalysis occurs through a double-displacement mechanism. The nucleophile active site attacks the C1' of nucleotide 34 to detach the guanine base from the RNA, forming a covalent enzyme-RNA intermediate. The proton acceptor active site deprotonates the incoming PreQ1, allowing a nucleophilic attack on the C1' of the ribose to form the product. After dissociation, two additional enzymatic reactions on the tRNA convert PreQ1 to queuine (Q), resulting in the hypermodified nucleoside queuosine (7-(((4,5-cis-dihydroxy-2-cyclopenten-1-yl)amino)methyl)-7-deazaguanosine). In Symbiobacterium thermophilum (strain DSM 24528 / JCM 14929 / IAM 14863 / T), this protein is Queuine tRNA-ribosyltransferase.